Consider the following 313-residue polypeptide: WD repeat-containing protein 82 (313 aa).

6 WD repeats span residues 19–58 (ENSD…PKRT), 105–144 (GHSK…CQGL), 146–184 (HLQG…KGPF), 192–231 (DRTC…VMHT), 236–276 (ANSK…KVAV), and 280–313 (KHTG…TIDD).

This sequence belongs to the WD repeat SWD2 family. As to quaternary structure, component of the SET1/COMPASS complex, at least composed of the catalytic subunit (SETD1A or SETD1B), WDR5, WDR82, RBBP5, ASH2L/ASH2, CXXC1/CFP1, HCFC1 and DPY30. Component of the PNUTS-PP1 phosphatase complex, composed of PPP1R10/PNUTS, TOX4, WDR82, and PPP1CA or PPP1CB or PPP1CC. Associated with multiple protein complexes including an RNA polymerase II complex, MLL3/MLL4 complex and a chaperonin-containing TCP1 complex. Interacts with SETD1B (via N-terminal region); the interaction is direct. Interacts with SETD1A (via N-terminal region); the interaction is direct. Interacts with CUL4B. Interacts with RBBP5. Interacts with POLR2B. Interacts with hyperphosphorylated C-terminal domain (CTD) of RNA polymerase II large subunit (POLR2A). Binds specifically to CTD heptad repeats phosphorylated on 'Ser-5' of each heptad. SETD1A enhances its interaction with POLR2A. Interacts with PPP1R10/PNUTS. Interacts with PPP1CA in the presence of PPP1R10/PNUTS. Interacts with ZC3H4; interaction is independent of the SET1 complex and promotes transcription termination of long non-coding RNAs (lncRNAs).

The protein resides in the nucleus. It is found in the chromosome. It localises to the cytoplasm. In terms of biological role, regulatory component of the SET1/COMPASS complex implicated in the tethering of this complex to transcriptional start sites of active genes. Facilitates histone H3 'Lys-4' methylation (H3K4me) via recruitment of the SETD1A or SETD1B to the 'Ser-5' phosphorylated C-terminal domain (CTD) of RNA polymerase II large subunit (POLR2A). Component of the PNUTS-PP1 protein phosphatase complex, a protein phosphatase 1 (PP1) complex that promotes RNA polymerase II transcription pause-release, allowing transcription elongation. PNUTS-PP1 also plays a role in the control of chromatin structure and cell cycle progression during the transition from mitosis into interphase. Together with ZC3H4, but independently of the SET1 complex, part of a transcription termination checkpoint that promotes transcription termination of long non-coding RNAs (lncRNAs). The transcription termination checkpoint is activated by the inefficiently spliced first exon of lncRNAs and promotes transcription termination of lncRNAs and their subsequent degradation by the exosome. The chain is WD repeat-containing protein 82 from Homo sapiens (Human).